Reading from the N-terminus, the 187-residue chain is Elongation factor P (187 aa).

This sequence belongs to the elongation factor P family.

The protein resides in the cytoplasm. Its pathway is protein biosynthesis; polypeptide chain elongation. Its function is as follows. Involved in peptide bond synthesis. Stimulates efficient translation and peptide-bond synthesis on native or reconstituted 70S ribosomes in vitro. Probably functions indirectly by altering the affinity of the ribosome for aminoacyl-tRNA, thus increasing their reactivity as acceptors for peptidyl transferase. The polypeptide is Elongation factor P (Zymomonas mobilis subsp. mobilis (strain ATCC 31821 / ZM4 / CP4)).